Reading from the N-terminus, the 710-residue chain is DNA ligase (710 aa).

NAD(+) is bound by residues 53-57, 102-103, and Glu136; these read DAEYD and SL. Residue Lys138 is the N6-AMP-lysine intermediate of the active site. Arg159, Glu196, Lys312, and Lys336 together coordinate NAD(+). Residues Cys429, Cys432, Cys453, and Cys459 each contribute to the Zn(2+) site. The region spanning 633 to 710 is the BRCT domain; that stretch reads ETSSPVAGKT…DEDQWIELAG (78 aa).

The protein belongs to the NAD-dependent DNA ligase family. LigA subfamily. Requires Mg(2+) as cofactor. Mn(2+) serves as cofactor.

It catalyses the reaction NAD(+) + (deoxyribonucleotide)n-3'-hydroxyl + 5'-phospho-(deoxyribonucleotide)m = (deoxyribonucleotide)n+m + AMP + beta-nicotinamide D-nucleotide.. Functionally, DNA ligase that catalyzes the formation of phosphodiester linkages between 5'-phosphoryl and 3'-hydroxyl groups in double-stranded DNA using NAD as a coenzyme and as the energy source for the reaction. It is essential for DNA replication and repair of damaged DNA. This chain is DNA ligase, found in Parvibaculum lavamentivorans (strain DS-1 / DSM 13023 / NCIMB 13966).